The chain runs to 170 residues: Protein SprT (170 aa).

One can recognise a SprT-like domain in the interval 22 to 163 (LQQANLTLQT…RCRRCGKTLR (142 aa)). His78 is a Zn(2+) binding site. Residue Glu79 is part of the active site. His82 contributes to the Zn(2+) binding site.

Belongs to the SprT family. Requires Zn(2+) as cofactor.

Its subcellular location is the cytoplasm. The sequence is that of Protein SprT from Pectobacterium carotovorum subsp. carotovorum (strain PC1).